We begin with the raw amino-acid sequence, 416 residues long: UDP-N-acetylmuramoylalanine--D-glutamate ligase (416 aa).

G108–T114 serves as a coordination point for ATP.

Belongs to the MurCDEF family.

Its subcellular location is the cytoplasm. It catalyses the reaction UDP-N-acetyl-alpha-D-muramoyl-L-alanine + D-glutamate + ATP = UDP-N-acetyl-alpha-D-muramoyl-L-alanyl-D-glutamate + ADP + phosphate + H(+). The protein operates within cell wall biogenesis; peptidoglycan biosynthesis. Functionally, cell wall formation. Catalyzes the addition of glutamate to the nucleotide precursor UDP-N-acetylmuramoyl-L-alanine (UMA). The chain is UDP-N-acetylmuramoylalanine--D-glutamate ligase from Chlamydia trachomatis serovar A (strain ATCC VR-571B / DSM 19440 / HAR-13).